Reading from the N-terminus, the 385-residue chain is ATP phosphoribosyltransferase regulatory subunit (385 aa).

Belongs to the class-II aminoacyl-tRNA synthetase family. HisZ subfamily. Heteromultimer composed of HisG and HisZ subunits.

The protein resides in the cytoplasm. It participates in amino-acid biosynthesis; L-histidine biosynthesis; L-histidine from 5-phospho-alpha-D-ribose 1-diphosphate: step 1/9. In terms of biological role, required for the first step of histidine biosynthesis. May allow the feedback regulation of ATP phosphoribosyltransferase activity by histidine. The sequence is that of ATP phosphoribosyltransferase regulatory subunit from Laribacter hongkongensis (strain HLHK9).